The primary structure comprises 159 residues: 2-C-methyl-D-erythritol 2,4-cyclodiphosphate synthase (159 aa).

Positions 10 and 12 each coordinate a divalent metal cation. 4-CDP-2-C-methyl-D-erythritol 2-phosphate contacts are provided by residues 10–12 (DVH) and 36–37 (HS). His-44 lines the a divalent metal cation pocket. 4-CDP-2-C-methyl-D-erythritol 2-phosphate contacts are provided by residues 58–60 (DIG), 63–67 (FPDTD), 102–108 (AQAPKMA), 134–137 (TTTE), Phe-141, and Arg-144.

This sequence belongs to the IspF family. As to quaternary structure, homotrimer. A divalent metal cation is required as a cofactor.

The catalysed reaction is 4-CDP-2-C-methyl-D-erythritol 2-phosphate = 2-C-methyl-D-erythritol 2,4-cyclic diphosphate + CMP. It participates in isoprenoid biosynthesis; isopentenyl diphosphate biosynthesis via DXP pathway; isopentenyl diphosphate from 1-deoxy-D-xylulose 5-phosphate: step 4/6. Its function is as follows. Involved in the biosynthesis of isopentenyl diphosphate (IPP) and dimethylallyl diphosphate (DMAPP), two major building blocks of isoprenoid compounds. Catalyzes the conversion of 4-diphosphocytidyl-2-C-methyl-D-erythritol 2-phosphate (CDP-ME2P) to 2-C-methyl-D-erythritol 2,4-cyclodiphosphate (ME-CPP) with a corresponding release of cytidine 5-monophosphate (CMP). This is 2-C-methyl-D-erythritol 2,4-cyclodiphosphate synthase from Shewanella halifaxensis (strain HAW-EB4).